Here is a 124-residue protein sequence, read N- to C-terminus: Large ribosomal subunit protein bL12 (124 aa).

Belongs to the bacterial ribosomal protein bL12 family. In terms of assembly, homodimer. Part of the ribosomal stalk of the 50S ribosomal subunit. Forms a multimeric L10(L12)X complex, where L10 forms an elongated spine to which 2 to 4 L12 dimers bind in a sequential fashion. Binds GTP-bound translation factors.

Forms part of the ribosomal stalk which helps the ribosome interact with GTP-bound translation factors. Is thus essential for accurate translation. This Idiomarina loihiensis (strain ATCC BAA-735 / DSM 15497 / L2-TR) protein is Large ribosomal subunit protein bL12.